A 945-amino-acid polypeptide reads, in one-letter code: Isoleucine--tRNA ligase (945 aa).

A 'HIGH' region motif is present at residues 66–76 (PYANGDIHLGH). Glutamate 581 is a binding site for L-isoleucyl-5'-AMP. Positions 622 to 626 (KMSKS) match the 'KMSKS' region motif. Position 625 (lysine 625) interacts with ATP. Zn(2+) contacts are provided by cysteine 908, cysteine 911, cysteine 928, and cysteine 931.

It belongs to the class-I aminoacyl-tRNA synthetase family. IleS type 1 subfamily. In terms of assembly, monomer. It depends on Zn(2+) as a cofactor.

Its subcellular location is the cytoplasm. The enzyme catalyses tRNA(Ile) + L-isoleucine + ATP = L-isoleucyl-tRNA(Ile) + AMP + diphosphate. In terms of biological role, catalyzes the attachment of isoleucine to tRNA(Ile). As IleRS can inadvertently accommodate and process structurally similar amino acids such as valine, to avoid such errors it has two additional distinct tRNA(Ile)-dependent editing activities. One activity is designated as 'pretransfer' editing and involves the hydrolysis of activated Val-AMP. The other activity is designated 'posttransfer' editing and involves deacylation of mischarged Val-tRNA(Ile). In Burkholderia ambifaria (strain MC40-6), this protein is Isoleucine--tRNA ligase.